The primary structure comprises 466 residues: MTKSVAIIGAGITGLSSAYFLKQQDPNIDVTIFEASNRPGGKIQSYRKDGYMIELGPESYLGRKTIMTELAKDIGLEQDIVTNTTGQSYIFAKNKLYPIPGGSIMGIPTDIKPFVTTKLISPLGKLRAGFDLLKKPTQMQDGDISVGAFFRARLGNEVLENLIEPLMGGIYGTDIDKLSLMSTFPNFKEKEEAFGSLIKGMKDEKNKRLKQRQLYPGAPKGQFKQFKHGLSSFIEALEQDVKNKGVTIRYNTSVDDIITSQKQYKIVYNDQLEEVYDGVLVTTPHQVFLNWFGQDPAFDYFKTMDSTTVATVVLAFDEKDIENTHDGTGFVIARTSDTDITACTWTSKKWPFTTPEGKVLIRAYVGKPGDTVVDDHTDNELVSIVRRDLSQMMTFKGDPEFTIVNRLPKSMPQYHVGHIQQIRQIQAHIKQTYPRLRVTGASFEAVGLPDCITQGKVAAEEVIAEL.

Residues 9–14, 34–35, Lys42, 56–59, Val254, and 446–448 each bind FAD; these read GAGITG, EA, GPES, and VGL.

The protein belongs to the protoporphyrinogen/coproporphyrinogen oxidase family. Coproporphyrinogen III oxidase subfamily. The cofactor is FAD.

The protein resides in the cytoplasm. It carries out the reaction coproporphyrinogen III + 3 O2 = coproporphyrin III + 3 H2O2. It participates in porphyrin-containing compound metabolism; protoheme biosynthesis. With respect to regulation, the generation of protoporphyrin IX, but not coproporphyrin III, is stimulated by heme-bound HemQ. This stimulatory effect is mediated by superoxide. Inhibited by acifluorfen analogs. Functionally, involved in coproporphyrin-dependent heme b biosynthesis. Catalyzes the oxidation of coproporphyrinogen III to coproporphyrin III. Can also oxidize protoporphyrinogen IX. The polypeptide is Coproporphyrinogen III oxidase (Staphylococcus aureus (strain NCTC 8325 / PS 47)).